The sequence spans 159 residues: RNA pyrophosphohydrolase (159 aa).

Residues 6 to 149 form the Nudix hydrolase domain; the sequence is GFRPNVGIIL…KREVYRRALK (144 aa). Positions 38-59 match the Nudix box motif; it reads GGINDRESPEEALYRELNEEVG.

Belongs to the Nudix hydrolase family. RppH subfamily. A divalent metal cation is required as a cofactor.

Its function is as follows. Accelerates the degradation of transcripts by removing pyrophosphate from the 5'-end of triphosphorylated RNA, leading to a more labile monophosphorylated state that can stimulate subsequent ribonuclease cleavage. This chain is RNA pyrophosphohydrolase, found in Ectopseudomonas mendocina (strain ymp) (Pseudomonas mendocina).